The sequence spans 382 residues: MDELSETQVMQNETATAVLPLLNGESQSFNLQKHLKYLTKMLDPLPSPFTVLDASRAWMVYWELSSLAILGKLDSSVCERAISSVRQLKGPSGGFCGGNGQDEHLLSTYASILSICLCDSTDAYSLIERDRLYDWLFSLKNPDGSFRVNNEGESDARSVYAAVCVSSLVGISMDDPLFEGTLQWLCKCQTYEGGLSGVPYAEAHGGYTFCALAAIALLGGLDNLNEIKLSTWLVQRQDPALYGFSGRSNKLVDGCYSWWVGASHVIVASGYGSASHKSLPNLFYNPEKLLGYILQCCQSTSGGLRDKPPKRPDQYHTCYCLLGLSSIAYDYRYHTSDGWSYKPSILHSSLSSLLPAHPIYCVPFGFEERIKSYFLSQESSKF.

PFTB repeat units follow at residues 78-119, 129-170, 178-219, 226-268, and 286-328; these read CERA…CLCD, RDRL…SLVG, FEGT…ALLG, EIKL…VIVA, and PEKL…SSIA. (2E,6E)-farnesyl diphosphate-binding positions include 204-207 and 247-250; these read HGGY and RSNK. Zn(2+)-binding residues include aspartate 253 and cysteine 255. 256 to 259 provides a ligand contact to (2E,6E)-farnesyl diphosphate; that stretch reads YSWW. Position 316 (histidine 316) interacts with Zn(2+).

Belongs to the protein prenyltransferase subunit beta family. Heterodimer of an alpha(cwp1) and a beta(cpp1) subunit. Requires Zn(2+) as cofactor.

It catalyses the reaction L-cysteinyl-[protein] + (2E,6E)-farnesyl diphosphate = S-(2E,6E)-farnesyl-L-cysteinyl-[protein] + diphosphate. Catalyzes the transfer of a farnesyl moiety from farnesyl diphosphate to a cysteine at the fourth position from the C-terminus of several proteins. The beta(cpp1) subunit is responsible for peptide-binding. The protein is Protein farnesyltransferase subunit beta (cpp1) of Schizosaccharomyces pombe (strain 972 / ATCC 24843) (Fission yeast).